The sequence spans 594 residues: Lipolysis-stimulated lipoprotein receptor (594 aa).

The signal sequence occupies residues 1 to 35 (MAPAASACAGAPGSHPATTIFVCLFLIIYCPDRAS). Over 36–206 (AIQVTVPDPY…PGFRAGPLED (171 aa)) the chain is Extracellular. Residues 89 to 181 (PASVDNQLNA…DLDGNNEAYA (93 aa)) enclose the Ig-like V-type domain. A disulfide bridge links cysteine 113 with cysteine 165. A helical membrane pass occupies residues 207–227 (WLFVVVVCLASLLFFLLLGIC). Over 228 to 594 (WCQCCPHTCC…LALSRESLVV (367 aa)) the chain is Cytoplasmic. Residue threonine 283 is modified to Phosphothreonine. Serine 308 carries the phosphoserine; by MAPK8 and MAPK9 modification. 4 positions are modified to phosphoserine: serine 314, serine 332, serine 375, and serine 379. Positions 375 to 387 (SEVTSLHEDDWRS) are enriched in basic and acidic residues. A disordered region spans residues 375–594 (SEVTSLHEDD…LALSRESLVV (220 aa)). Threonine 396 is subject to Phosphothreonine. Serine 407, serine 410, and serine 436 each carry phosphoserine. Over residues 435–444 (RSVDALDDIN) the composition is skewed to basic and acidic residues. Residues 445–460 (RPGSTESGRSSPPSSG) are compositionally biased toward low complexity. Residues serine 471 and serine 473 each carry the phosphoserine modification. Residues 472 to 550 (RSRDDLYDPD…GAGERRRVYR (79 aa)) are compositionally biased toward basic and acidic residues. Position 478 is a phosphotyrosine (tyrosine 478). At serine 576 the chain carries Phosphoserine. Lysine 583 participates in a covalent cross-link: Glycyl lysine isopeptide (Lys-Gly) (interchain with G-Cter in ubiquitin). A phosphoserine mark is found at serine 588 and serine 591.

Belongs to the immunoglobulin superfamily. LISCH7 family. Homotrimer or homotetramer. Assembles into cell-cell contacts. Interacts (via the cytoplasmic domain) with MARVELD2 (via C-terminal cytoplasmic domain); the interaction is required to recruit MARVELD2 to tricellular contacts. Interacts with OCLN. In terms of processing, phosphorylation at Ser-308 by MAPK8/JNK1 and MAPK9/JNK2 may be required for exclusive localization at tricellular tight junstions. Polyubiquitinated at Lys-583 via 'Lys-63'-linked ubiquitin chains; deubiquitinated by USP53. Expressed in epithelial tissues (at protein level). Specifically expressed in liver and to a lower extent in kidney (at protein level). Also detected in brain, testis, ovaries, adrenal gland, intestine, muscle, and lung. In colon, only expressed in the lower portion of crypts. Expressed in the liver. As to expression, expressed in liver, stomach, small intestine and colon. Also detected in other epithelial tissues.

The protein resides in the cell membrane. Its subcellular location is the cell junction. The protein localises to the tight junction. Probable role in the clearance of triglyceride-rich lipoprotein from blood. Binds chylomicrons, LDL and VLDL in presence of free fatty acids and allows their subsequent uptake in the cells. Maintains epithelial barrier function by recruiting MARVELD2/tricellulin to tricellular tight junctions. The polypeptide is Lipolysis-stimulated lipoprotein receptor (Mus musculus (Mouse)).